The following is a 206-amino-acid chain: Probable GTP-binding protein EngB (206 aa).

Positions 8-195 constitute an EngB-type G domain; that stretch reads RDAEVVLVGR…EECLRTRFHE (188 aa). GTP-binding positions include 16-23, 41-45, 60-63, 140-143, and 175-177; these read GRSNVGKS, GVTRQ, DLPG, NKTD, and ICA. Ser23 and Thr43 together coordinate Mg(2+).

The protein belongs to the TRAFAC class TrmE-Era-EngA-EngB-Septin-like GTPase superfamily. EngB GTPase family. Mg(2+) is required as a cofactor.

Functionally, necessary for normal cell division and for the maintenance of normal septation. In Halorubrum lacusprofundi (strain ATCC 49239 / DSM 5036 / JCM 8891 / ACAM 34), this protein is Probable GTP-binding protein EngB.